The following is a 419-amino-acid chain: Carboxypeptidase A1 (419 aa).

Positions 1-16 (MQGLLILSVLLGAALG) are cleaved as a signal peptide. Positions 17–110 (KEDFVGHQVL…QEQMFASQSR (94 aa)) are cleaved as a propeptide — activation peptide. The region spanning 121–414 (TYHTLDEIYD…LGVLTIMEHT (294 aa)) is the Peptidase M14 domain. Zn(2+) contacts are provided by His179 and Glu182. Residues 179-182 (HSRE), Arg237, and 254-255 (NR) contribute to the substrate site. A disulfide bridge connects residues Cys248 and Cys271. His306 is a binding site for Zn(2+). Substrate contacts are provided by residues 307 to 308 (SY) and Tyr358. Glu380 serves as the catalytic Proton donor/acceptor.

Belongs to the peptidase M14 family. As to quaternary structure, monomer. May form a complex with proelastase 2. Zn(2+) serves as cofactor. As to expression, pancreas.

It localises to the secreted. It carries out the reaction Release of a C-terminal amino acid, but little or no action with -Asp, -Glu, -Arg, -Lys or -Pro.. The catalysed reaction is leukotriene C4 + H2O = leukotriene F4 + glycine. With respect to regulation, inhibited by interaction with the S.magnifica carboxypeptidase inhibitor SmCI. Its function is as follows. Carboxypeptidase that catalyzes the release of a C-terminal amino acid, but has little or no action with -Asp, -Glu, -Arg, -Lys or -Pro. Catalyzes the conversion of leukotriene C4 to leukotriene F4 via the hydrolysis of an amide bond. In Bos taurus (Bovine), this protein is Carboxypeptidase A1 (CPA1).